A 541-amino-acid chain; its full sequence is Arginine-containing cyclodipeptide synthase avaA (541 aa).

A Conserved DDXXE motif motif is present at residues 428–432; it reads DDIAE.

The protein belongs to the arginine-containing cyclodipeptide synthase family.

It catalyses the reaction L-tryptophyl-tRNA(Trp) + L-arginyl-tRNA(Arg) = cyclo(L-arginyl-L-tryptophyl) + tRNA(Trp) + tRNA(Arg) + H(+). The protein operates within secondary metabolite biosynthesis. Its function is as follows. Arginine-containing cyclodipeptide synthase; part of the cluster that mediates the biosynthesis of a highly modified cyclo-arginine-tryptophan dipeptide (cRW). Within the pathway, avaA acts as the scaffold-generating enzyme and is responsible for formation of the cyclo-Arg-Trp diketopiperazine (cRW) from L-arginyl-tRNA(Arg) + L-tryptophanyl-tRNA(Trp). AvaB then acts as a multifunctional flavoenzyme that is responsible for generating the cyclo-Arg-formylkynurenine DKP, which can be deformylated by avaC. AvaB then catalyzes an additional N-oxidation followed by cyclization and dehydration. The next step is an N-acetylation of the guanidine group catalyzed by the arginine N-acetyltransferase AvaD. The role of the additional enzymes identified within the ava cluster still have to be determined. The chain is Arginine-containing cyclodipeptide synthase avaA from Aspergillus versicolor.